We begin with the raw amino-acid sequence, 232 residues long: Large ribosomal subunit protein uL1 (232 aa).

Belongs to the universal ribosomal protein uL1 family. In terms of assembly, part of the 50S ribosomal subunit.

Binds directly to 23S rRNA. The L1 stalk is quite mobile in the ribosome, and is involved in E site tRNA release. In terms of biological role, protein L1 is also a translational repressor protein, it controls the translation of the L11 operon by binding to its mRNA. The sequence is that of Large ribosomal subunit protein uL1 from Xanthomonas axonopodis pv. citri (strain 306).